A 324-amino-acid polypeptide reads, in one-letter code: GTP cyclohydrolase 1 (324 aa).

2 disordered regions span residues 33–59 and 79–119; these read GRNNSVCSTSSTSGTSSLADRQQNQAE and VPLA…TPGH. Low complexity predominate over residues 40-49; the sequence is STSSTSGTSS. Polar residues-rich tracts occupy residues 50-59 and 93-117; these read LADRQQNQAE and TNGSSPDSDGTQPKTPLTPRTSTTP. Positions 214, 217, and 285 each coordinate Zn(2+).

Belongs to the GTP cyclohydrolase I family. In terms of assembly, toroid-shaped homodecamer, composed of two pentamers of five dimers. Isoform B is expressed almost exclusively in adult heads.

The enzyme catalyses GTP + H2O = 7,8-dihydroneopterin 3'-triphosphate + formate + H(+). The protein operates within cofactor biosynthesis; 7,8-dihydroneopterin triphosphate biosynthesis; 7,8-dihydroneopterin triphosphate from GTP: step 1/1. In terms of biological role, isoform B is required for eye pigment production, Isoform C may be required for normal embryonic development and segment pattern formation. The protein is GTP cyclohydrolase 1 (Pu) of Drosophila melanogaster (Fruit fly).